The primary structure comprises 1374 residues: DNA-directed RNA polymerase subunit beta' (1374 aa).

The Zn(2+) site is built by cysteine 71, cysteine 73, cysteine 86, and cysteine 89. Mg(2+) contacts are provided by aspartate 462, aspartate 464, and aspartate 466. The Zn(2+) site is built by cysteine 810, cysteine 884, cysteine 891, and cysteine 894.

It belongs to the RNA polymerase beta' chain family. The RNAP catalytic core consists of 2 alpha, 1 beta, 1 beta' and 1 omega subunit. When a sigma factor is associated with the core the holoenzyme is formed, which can initiate transcription. Mg(2+) serves as cofactor. Requires Zn(2+) as cofactor.

It carries out the reaction RNA(n) + a ribonucleoside 5'-triphosphate = RNA(n+1) + diphosphate. DNA-dependent RNA polymerase catalyzes the transcription of DNA into RNA using the four ribonucleoside triphosphates as substrates. The sequence is that of DNA-directed RNA polymerase subunit beta' from Rickettsia massiliae (strain Mtu5).